The following is a 382-amino-acid chain: ATP phosphoribosyltransferase regulatory subunit (382 aa).

This sequence belongs to the class-II aminoacyl-tRNA synthetase family. HisZ subfamily. In terms of assembly, heteromultimer composed of HisG and HisZ subunits.

It localises to the cytoplasm. Its pathway is amino-acid biosynthesis; L-histidine biosynthesis; L-histidine from 5-phospho-alpha-D-ribose 1-diphosphate: step 1/9. Its function is as follows. Required for the first step of histidine biosynthesis. May allow the feedback regulation of ATP phosphoribosyltransferase activity by histidine. The polypeptide is ATP phosphoribosyltransferase regulatory subunit (Verminephrobacter eiseniae (strain EF01-2)).